We begin with the raw amino-acid sequence, 480 residues long: G-protein coupled receptor seb-2 (480 aa).

The Extracellular portion of the chain corresponds to 1 to 222 (MNPSISTAGA…CMSNGDVEAR (222 aa)). N-linked (GlcNAc...) asparagine glycosylation occurs at Asn95. Residues 223 to 243 (ILAGLLTYSASVIFLIPAVFL) form a helical membrane-spanning segment. At 244-261 (LTLLRPIRCQPMFILHRH) the chain is on the cytoplasmic side. The helical transmembrane segment at 262–282 (LLISCLLYGAFYLITVSLFVV) threads the bilayer. The Extracellular segment spans residues 283 to 305 (NDAPLSSQVFQNHLFCRLLFSIQ). Residues 306–328 (LRYLRLTNFTWMLAEAVYLWRLL) form a helical membrane-spanning segment. Over 329 to 343 (HTAQHSEGETLRSYK) the chain is Cytoplasmic. The helical transmembrane segment at 344–364 (VICWGVPGVITVVYIFVRSLN) threads the bilayer. Over 365 to 386 (DDVGMCWIENSTVAWIEWMIIT) the chain is Extracellular. The helical transmembrane segment at 387–407 (PSLLAMGVNLLLLGLIVYILV) threads the bilayer. Over 408 to 423 (KKLRCDPHLERIQYRK) the chain is Cytoplasmic. Residues 424 to 444 (AVRGALMLIPVFGVQQLLTIY) form a helical membrane-spanning segment. Over 445 to 480 (RFRNVCLIYRLLHKSFCRRMCSEILVITSGEAGSRS) the chain is Extracellular.

This sequence belongs to the G-protein coupled receptor 2 family. Present in the head body-wall muscles from the L1 larval stage through to adulthood. Also expressed between L4 and the adult molt in vulval vm1 muscle cells. These cells play a role in opening the vulva during egg laying.

Its subcellular location is the cell membrane. In terms of biological role, not known. Putative receptor. This chain is G-protein coupled receptor seb-2, found in Caenorhabditis elegans.